The chain runs to 122 residues: Large ribosomal subunit protein bL12 (122 aa).

Belongs to the bacterial ribosomal protein bL12 family. In terms of assembly, homodimer. Part of the ribosomal stalk of the 50S ribosomal subunit. Forms a multimeric L10(L12)X complex, where L10 forms an elongated spine to which 2 to 4 L12 dimers bind in a sequential fashion. Binds GTP-bound translation factors.

Functionally, forms part of the ribosomal stalk which helps the ribosome interact with GTP-bound translation factors. Is thus essential for accurate translation. This Mycoplasma pneumoniae (strain ATCC 29342 / M129 / Subtype 1) (Mycoplasmoides pneumoniae) protein is Large ribosomal subunit protein bL12.